The primary structure comprises 92 residues: UPF0250 protein Pmen_3793 (92 aa).

The protein belongs to the UPF0250 family.

In Ectopseudomonas mendocina (strain ymp) (Pseudomonas mendocina), this protein is UPF0250 protein Pmen_3793.